Here is a 138-residue protein sequence, read N- to C-terminus: Protein PsiE homolog (138 aa).

4 consecutive transmembrane segments (helical) span residues 12-34 (YLLQALLNVCLFFLALALSALLI), 56-76 (YEMLGELLIFFMYFEFIALII), 84-104 (HFPLRYFIYIGITAVIRLIII), and 109-129 (AISTFWWAMAILAMICGFFIA).

Belongs to the PsiE family.

Its subcellular location is the cell membrane. The polypeptide is Protein PsiE homolog (Bacillus subtilis (strain 168)).